The following is a 1079-amino-acid chain: Lon protease homolog, mitochondrial (1079 aa).

Residues 1 to 60 constitute a mitochondrion transit peptide; that stretch reads MLRPRTYVRKLAWRCPRKSQLGLRLATSVSSHKSLPLPMNFDISHSQSAFRAYQDIIHRN. Over residues 61 to 116 the composition is skewed to basic and acidic residues; the sequence is KSVGDDEPSQRSENENNPSESDKDSNQDPETPKKDKESENDKEPEKEKDIENDNKV. Disordered stretches follow at residues 61–158 and 262–285; these read KSVG…VDPV and LTTP…ESFP. A compositionally biased stretch (polar residues) spans 117–131; it reads SSESNENVTLASSNT. Low complexity predominate over residues 132-143; that stretch reads GGAAPPNGNNNG. The region spanning 165–391 is the Lon N-terminal domain; that stretch reads LLAIPMKDRP…RALELLKVEL (227 aa). The segment covering 262–281 has biased composition (basic and acidic residues); the sequence is LTTPSSEKEAKSEEPSKEDA. Position 543–550 (543–550) interacts with ATP; the sequence is GPPGTGKT. Basic and acidic residues predominate over residues 756–765; it reads ALDSSKEKEG. The interval 756–832 is disordered; sequence ALDSSKEKEG…SEEDQQPEPK (77 aa). Residues 768–779 are compositionally biased toward low complexity; sequence ASSEEANVNSES. Residues 780–802 show a composition bias toward polar residues; it reads TKSNTSQAEPVAESSTDISTKSK. A compositionally biased stretch (basic and acidic residues) spans 803-818; the sequence is VASEKIETKEKKETNK. The region spanning 865–1053 is the Lon proteolytic domain; that stretch reads FPPPGVATGL…QEVFDKIFPN (189 aa). Residues serine 959 and lysine 1002 contribute to the active site.

This sequence belongs to the peptidase S16 family. In terms of assembly, homohexamer or homoheptamer. Organized in a ring with a central cavity.

The protein resides in the mitochondrion matrix. It carries out the reaction Hydrolysis of proteins in presence of ATP.. Its function is as follows. ATP-dependent serine protease that mediates the selective degradation of misfolded, unassembled or oxidatively damaged polypeptides as well as certain short-lived regulatory proteins in the mitochondrial matrix. May also have a chaperone function in the assembly of inner membrane protein complexes. Participates in the regulation of mitochondrial gene expression and in the maintenance of the integrity of the mitochondrial genome. Binds to mitochondrial DNA in a site-specific manner. This chain is Lon protease homolog, mitochondrial, found in Debaryomyces hansenii (strain ATCC 36239 / CBS 767 / BCRC 21394 / JCM 1990 / NBRC 0083 / IGC 2968) (Yeast).